We begin with the raw amino-acid sequence, 811 residues long: Auxin response factor 8 (811 aa).

Residues 126-228 (FCKTLTASDT…QLFLGIRHAT (103 aa)) constitute a DNA-binding region (TF-B3). Disordered stretches follow at residues 467–496 (HQYLQQSASHNSDLMLQQQQQQQASRHLMH) and 544–565 (HLQQWQQQSEMPSPSFMKSDFT). 2 stretches are compositionally biased toward polar residues: residues 469-482 (YLQQSASHNSDLML) and 544-555 (HLQQWQQQSEMP). The PB1 domain maps to 705 to 789 (KNFVKVYKSG…WYIKILSPED (85 aa)).

This sequence belongs to the ARF family. In terms of assembly, homodimers and heterodimers. Expressed in the whole plant.

It is found in the nucleus. In terms of biological role, auxin response factors (ARFs) are transcriptional factors that bind specifically to the DNA sequence 5'-TGTCTC-3' found in the auxin-responsive promoter elements (AuxREs). Seems to act as transcriptional activator. Formation of heterodimers with Aux/IAA proteins may alter their ability to modulate early auxin response genes expression. Regulates both stamen and gynoecium maturation. Promotes jasmonic acid production. Partially redundant with ARF6. Involved in fruit initiation. Acts as an inhibitor to stop further carpel development in the absence of fertilization and the generation of signals required to initiate fruit and seed development. This Arabidopsis thaliana (Mouse-ear cress) protein is Auxin response factor 8 (ARF8).